The following is a 377-amino-acid chain: Pseudouridylate synthase RPUSD4, mitochondrial (377 aa).

Residues 1 to 46 constitute a mitochondrion transit peptide; it reads MAAPCLRTPGVQLLSMSSRPGRLFTPGSWSFCSSATSSRPLNAQRL. Asp153 is a catalytic residue.

Belongs to the pseudouridine synthase RluA family. In terms of assembly, interacts with 16S mt-rRNA, mt-tRNA(Phe) and mt-tRNA(Met). Forms a regulatory protein-RNA complex, consisting of RCC1L, NGRN, RPUSD3, RPUSD4, TRUB2, FASTKD2 and 16S mt-rRNA.

Its subcellular location is the mitochondrion matrix. The protein resides in the nucleus. The protein localises to the cytoplasm. It catalyses the reaction uridine in 5S rRNA = pseudouridine in 5S rRNA. The enzyme catalyses a uridine in tRNA = a pseudouridine in tRNA. It carries out the reaction a uridine in mRNA = a pseudouridine in mRNA. Its function is as follows. Catalyzes uridine to pseudouridine isomerization (pseudouridylation) of different mitochondrial RNA substrates. Acts on position 1397 in 16S mitochondrial ribosomal RNA (16S mt-rRNA). This modification is required for the assembly of 16S mt-rRNA into a functional mitochondrial ribosome. As a component of a functional protein-RNA module, consisting of RCC1L, NGRN, RPUSD3, RPUSD4, TRUB2, FASTKD2 and 16S mt-rRNA, controls 16S mt-rRNA abundance and is required for intra-mitochondrial translation. Acts on position 39 in mitochondrial tRNA(Phe). Also catalyzes pseudouridylation of mRNAs in nucleus: acts as a regulator of pre-mRNA splicing by mediating pseudouridylation of pre-mRNAs at locations associated with alternatively spliced regions. Pseudouridylation of pre-mRNAs near splice sites directly regulates mRNA splicing and mRNA 3'-end processing. The polypeptide is Pseudouridylate synthase RPUSD4, mitochondrial (Mus musculus (Mouse)).